We begin with the raw amino-acid sequence, 320 residues long: Cytochrome f (320 aa).

The first 35 residues, 1-35, serve as a signal peptide directing secretion; the sequence is MQNRKTFSWVKEQMTRSIYVSIMIYVITRASISNA. The heme site is built by Y36, C56, C59, and H60. Residues 286-306 traverse the membrane as a helical segment; the sequence is VQGLLFFLASVILAQIFLVLK.

This sequence belongs to the cytochrome f family. As to quaternary structure, the 4 large subunits of the cytochrome b6-f complex are cytochrome b6, subunit IV (17 kDa polypeptide, petD), cytochrome f and the Rieske protein, while the 4 small subunits are PetG, PetL, PetM and PetN. The complex functions as a dimer. Heme is required as a cofactor.

It is found in the plastid. The protein resides in the chloroplast thylakoid membrane. Its function is as follows. Component of the cytochrome b6-f complex, which mediates electron transfer between photosystem II (PSII) and photosystem I (PSI), cyclic electron flow around PSI, and state transitions. The polypeptide is Cytochrome f (Phalaenopsis aphrodite subsp. formosana (Moth orchid)).